We begin with the raw amino-acid sequence, 531 residues long: Conglutin beta 1 (531 aa).

The first 30 residues, 1-30 (MGKMRVRFPTLVLVLGIVFLMAVSIGIAYG), serve as a signal peptide directing secretion. Positions 31-108 (EKDVLKSHER…EQQQGSPSYS (78 aa)) are excised as a propeptide. Basic and acidic residues-rich tracts occupy residues 37 to 51 (SHER…EWQP) and 79 to 99 (SGYE…REQE). Disordered stretches follow at residues 37 to 124 (SHER…RFQT), 283 to 302 (QEYE…EGVI), and 314 to 337 (TKYA…LRSN). Residues 115–273 (YHFNSQRFQT…TFNTRYEEIQ (159 aa)) enclose the Cupin type-1 1 domain. Positions 286 to 302 (EEQRRGQEQSHQDEGVI) are enriched in basic and acidic residues. Polar residues predominate over residues 316 to 337 (YAQSSSGKDKPSQSGPFNLRSN). A Cupin type-1 2 domain is found at 332–494 (FNLRSNEPIY…TFPGSAEDIE (163 aa)). An N-linked (GlcNAc...) asparagine glycan is attached at N444. Residues 508 to 531 (ALPQQQQQSEKEGRRGRRGPISSI) form a disordered region.

The protein belongs to the 7S seed storage protein family.

In terms of biological role, seed storage protein. Accumulates during seed development and is hydrolyzed after germination to provide a carbon and nitrogen source for the developing seedling. Its function is as follows. Has a lectin-like activity. This Lupinus albus (White lupine) protein is Conglutin beta 1.